The sequence spans 596 residues: Elongation factor 4 (596 aa).

Residues 2–183 enclose the tr-type G domain; that stretch reads KNIRNFSIIA…EIIRRIPAPN (182 aa). Residues 14 to 19 and 130 to 133 contribute to the GTP site; these read DHGKST and NKID.

The protein belongs to the TRAFAC class translation factor GTPase superfamily. Classic translation factor GTPase family. LepA subfamily.

The protein resides in the cell inner membrane. It catalyses the reaction GTP + H2O = GDP + phosphate + H(+). Its function is as follows. Required for accurate and efficient protein synthesis under certain stress conditions. May act as a fidelity factor of the translation reaction, by catalyzing a one-codon backward translocation of tRNAs on improperly translocated ribosomes. Back-translocation proceeds from a post-translocation (POST) complex to a pre-translocation (PRE) complex, thus giving elongation factor G a second chance to translocate the tRNAs correctly. Binds to ribosomes in a GTP-dependent manner. In Wolinella succinogenes (strain ATCC 29543 / DSM 1740 / CCUG 13145 / JCM 31913 / LMG 7466 / NCTC 11488 / FDC 602W) (Vibrio succinogenes), this protein is Elongation factor 4.